A 321-amino-acid polypeptide reads, in one-letter code: Corticotropin-releasing factor-binding protein (321 aa).

The N-terminal stretch at 1–21 (MTPASRPDWCLILLFLAVLRG) is a signal peptide. Cystine bridges form between Cys59-Cys80, Cys103-Cys140, Cys182-Cys204, Cys237-Cys264, and Cys277-Cys317. Asn203 carries N-linked (GlcNAc...) asparagine glycosylation.

The protein belongs to the CRF-binding protein family.

Its subcellular location is the secreted. Binds CRF and inactivates it. May prevent inappropriate pituitary-adrenal stimulation in pregnancy. The protein is Corticotropin-releasing factor-binding protein (crhbp) of Xenopus laevis (African clawed frog).